The primary structure comprises 432 residues: Nuclear pore complex-interacting protein family member B9 (432 aa).

2 disordered regions span residues 260–280 (RMGR…NSLS) and 353–420 (SPLP…LRTR). Positions 270-280 (QQHSITDNSLS) are enriched in polar residues. A compositionally biased stretch (basic and acidic residues) spans 374 to 402 (EVEKPPKPKRWRVDEVEQSPKPKRQREAE). Residues 408 to 420 (KPKRRRLSKLRTR) are compositionally biased toward basic residues.

It belongs to the NPIP family.

The polypeptide is Nuclear pore complex-interacting protein family member B9 (NPIPB9) (Homo sapiens (Human)).